The sequence spans 463 residues: FAD-dependent monooxygenase nodM (463 aa).

Residues 5–25 traverse the membrane as a helical segment; that stretch reads EFKVIIVGGSLAGLTLAHCLL. Residues Glu35, Gly49, Arg108, Asp305, and Ala318 each contribute to the FAD site. Residues 438-458 traverse the membrane as a helical segment; sequence ILLGFTGVFTSALAMVVLLHI.

The protein belongs to the paxM FAD-dependent monooxygenase family. The cofactor is FAD.

It is found in the membrane. It functions in the pathway secondary metabolite biosynthesis. Functionally, FAD-dependent monooxygenase; part of the gene cluster that mediates the biosynthesis of the indole diterpenes nodulisporic acids (NA). Nodulisporic acid A (NAA) and its chemically modified derivatives are of particular significance because of their highly potent insecticidal activity against blood-feeding arthropods and lack of observable adverse effects on mammals, in particular the tremogenicity associated with the paspaline-derived IDTs is not observed. The geranylgeranyl diphosphate (GGPP) synthase ggs1, localized outside of the cluster, is proposed to catalyze the first step in nodulisporic acid biosynthesis via conversion of farnesyl pyrophosphate and isopentyl pyrophosphate into geranylgeranyl pyrophosphate (GGPP). Condensation of indole-3-glycerol phosphate with GGPP by the prenyl transferase nodC then forms 3-geranylgeranylindole (3-GGI). Epoxidation by the FAD-dependent monooxygenase nodM leads to a single-epoxidized-GGI that is substrate of the terpene cyclase nodB for cyclization to yield emindole SB. The terminal methyl carbon, C28, of emindole SB is then oxidized by the cytochrome P450 monooxygenase nodW to produce nodulisporic acid F (NAF), the pentacyclic core of NAA. NAF is converted to nodulisporic acid E (NAE) via prenylation. This step is probably performed by one of the indole diterpene prenyltransferases nodD1 or nodD2. Several oxidation steps performed by the FAD-linked oxidoreductase nodO and one of the cytochrome P450 monooxygenase nodR, nodX or nodZ further convert NAE to nodulisporic acid D (NAD). NAD is substrate of cytochrome P450 monooxygenase nodJ to produce the precursor of nodulisporic acid C (NAC), converted to NAC by one of the indole diterpene prenyltransferases nodD1 or nodD2. The FAD-dependent monooxygenase nodY2 then oxidizes NAC to nodulisporic acid B (NAB). Finally NAB is converted to NAA by one of the cytochrome P450 monooxygenases nodR, nodX or nodZ. The chain is FAD-dependent monooxygenase nodM from Hypoxylon pulicicidum.